Here is a 226-residue protein sequence, read N- to C-terminus: Thiopurine S-methyltransferase (226 aa).

Positions 16, 51, 72, and 131 each coordinate S-adenosyl-L-methionine.

It belongs to the class I-like SAM-binding methyltransferase superfamily. TPMT family.

It localises to the cytoplasm. The enzyme catalyses S-adenosyl-L-methionine + a thiopurine = S-adenosyl-L-homocysteine + a thiopurine S-methylether.. This Francisella tularensis subsp. tularensis (strain SCHU S4 / Schu 4) protein is Thiopurine S-methyltransferase.